Here is a 270-residue protein sequence, read N- to C-terminus: Putative carboxymethylenebutenolidase (270 aa).

Active-site residues include C147, D204, and H236.

This sequence belongs to the dienelactone hydrolase family.

It carries out the reaction 2-(5-oxo-2,5-dihydrofuran-2-ylidene)acetate + H2O = 4-oxohex-2-enedioate + H(+). The protein is Putative carboxymethylenebutenolidase (ysgA) of Salmonella typhimurium (strain LT2 / SGSC1412 / ATCC 700720).